Reading from the N-terminus, the 658-residue chain is Translin-associated factor X-interacting protein 1 (658 aa).

Coiled coils occupy residues 144–184 (EISL…AEEY) and 230–295 (ALKM…LMQL).

As to quaternary structure, interacts with TSNAX.

The protein localises to the cytoplasm. It is found in the perinuclear region. Its function is as follows. Possible role in spermatogenesis. The polypeptide is Translin-associated factor X-interacting protein 1 (Homo sapiens (Human)).